The chain runs to 80 residues: Cell division protein ZapB (80 aa).

Residues 3–80 are a coiled coil; sequence FEVLEKLEAK…ALLGKMEDVE (78 aa).

Belongs to the ZapB family. As to quaternary structure, homodimer. The ends of the coiled-coil dimer bind to each other, forming polymers. Interacts with FtsZ.

The protein resides in the cytoplasm. In terms of biological role, non-essential, abundant cell division factor that is required for proper Z-ring formation. It is recruited early to the divisome by direct interaction with FtsZ, stimulating Z-ring assembly and thereby promoting cell division earlier in the cell cycle. Its recruitment to the Z-ring requires functional FtsA or ZipA. In Vibrio vulnificus (strain CMCP6), this protein is Cell division protein ZapB.